Consider the following 918-residue polypeptide: Serine/threonine-protein kinase D1 (918 aa).

Tyr-93 bears the Phosphotyrosine mark. The segment at 144 to 194 (PHALFVHSYRAPAFCDHCGEMLWGLVRQGLKCEGCGLNYHKRCAFKIPNNC) adopts a Phorbol-ester/DAG-type 1 zinc-finger fold. Phosphoserine occurs at positions 203, 206, 217, and 221. The Phorbol-ester/DAG-type 2 zinc-finger motif lies at 276-326 (PHTFVIHSYTRPTVCQFCKKLLKGLFRQGLQCKDCRFNCHKRCAPKVPNNC). Disordered regions lie at residues 338–362 (SPGA…NSGL) and 380–408 (EGQS…STSN). Acidic residues-rich tracts occupy residues 345-355 (VVMEEGSDDND) and 387-396 (EMQDPDADQE). The residue at position 351 (Ser-351) is a Phosphoserine. A phosphoserine; by MAPK13 mark is found at Ser-403 and Ser-407. The PH domain occupies 428–547 (TVMKEGWMVH…WEVAIQHALM (120 aa)). Position 438 is a phosphotyrosine (Tyr-438). Ser-454 is subject to Phosphoserine. A Phosphotyrosine; by ABL modification is found at Tyr-469. At Tyr-508 the chain carries Phosphotyrosine. Residue Ser-554 is modified to Phosphoserine. The Protein kinase domain occupies 589 to 845 (IFPDEVLGSG…VDKTLSHPWL (257 aa)). ATP is bound by residues 595 to 603 (LGSGQFGIV) and Lys-618. Residue Asp-712 is the Proton acceptor of the active site. A Phosphoserine; by PKC/PRKCD modification is found at Ser-744. At Ser-748 the chain carries Phosphoserine; by autocatalysis and PKC/PRKCD. Residue Tyr-755 is modified to Phosphotyrosine. Phosphoserine; by autocatalysis is present on Ser-916.

It belongs to the protein kinase superfamily. CAMK Ser/Thr protein kinase family. PKD subfamily. In terms of assembly, interacts (via N-terminus) with ADAP1/CENTA1. Interacts with MAPK13. Interacts with DAPK1 in an oxidative stress-regulated manner. Interacts with USP28; the interaction induces phosphorylation of USP28 and activated KRAS-mediated stabilization of ZNF304. Interacts with AKAP13 (via C-terminal domain). Mg(2+) is required as a cofactor. Phosphorylated at Ser-403 and Ser-407 by MAPK13 during regulation of insulin secretion in pancreatic beta cells. Phosphorylated by DAPK1. Phosphorylated at Tyr-93 and by ABL at Tyr-469, which primes the kinase in response to oxidative stress, and promotes a second step activating phosphorylation at Ser-744/Ser-748 by PKRD. Phosphorylated on Ser-916 upon S.enterica infection in macrophages.

The protein localises to the cytoplasm. It is found in the cell membrane. It localises to the golgi apparatus. Its subcellular location is the trans-Golgi network. It catalyses the reaction L-seryl-[protein] + ATP = O-phospho-L-seryl-[protein] + ADP + H(+). It carries out the reaction L-threonyl-[protein] + ATP = O-phospho-L-threonyl-[protein] + ADP + H(+). Its activity is regulated as follows. Activated by DAG and phorbol esters. Phorbol-ester/DAG-type domain 1 binds DAG with high affinity and appears to play the dominant role in mediating translocation to the cell membrane and trans-Golgi network. Phorbol-ester/DAG-type domain 2 binds phorbol ester with higher affinity. Autophosphorylation of Ser-748 and phosphorylation of Ser-744 by PKC relieves auto-inhibition by the PH domain. Phosphorylation on Tyr-469 by the SRC-ABL1 pathway in response to oxidative stress, is also required for activation. Activated by DAPK1 under oxidative stress. In terms of biological role, serine/threonine-protein kinase that converts transient diacylglycerol (DAG) signals into prolonged physiological effects downstream of PKC, and is involved in the regulation of MAPK8/JNK1 and Ras signaling, Golgi membrane integrity and trafficking, cell survival through NF-kappa-B activation, cell migration, cell differentiation by mediating HDAC7 nuclear export, cell proliferation via MAPK1/3 (ERK1/2) signaling, and plays a role in cardiac hypertrophy, VEGFA-induced angiogenesis, genotoxic-induced apoptosis and flagellin-stimulated inflammatory response. Phosphorylates the epidermal growth factor receptor (EGFR) on dual threonine residues, which leads to the suppression of epidermal growth factor (EGF)-induced MAPK8/JNK1 activation and subsequent JUN phosphorylation. Phosphorylates RIN1, inducing RIN1 binding to 14-3-3 proteins YWHAB, YWHAE and YWHAZ and increased competition with RAF1 for binding to GTP-bound form of Ras proteins (NRAS, HRAS and KRAS). Acts downstream of the heterotrimeric G-protein beta/gamma-subunit complex to maintain the structural integrity of the Golgi membranes, and is required for protein transport along the secretory pathway. In the trans-Golgi network (TGN), regulates the fission of transport vesicles that are on their way to the plasma membrane. May act by activating the lipid kinase phosphatidylinositol 4-kinase beta (PI4KB) at the TGN for the local synthesis of phosphorylated inositol lipids, which induces a sequential production of DAG, phosphatidic acid (PA) and lyso-PA (LPA) that are necessary for membrane fission and generation of specific transport carriers to the cell surface. Under oxidative stress, is phosphorylated at Tyr-469 via SRC-ABL1 and contributes to cell survival by activating IKK complex and subsequent nuclear translocation and activation of NFKB1. Involved in cell migration by regulating integrin alpha-5/beta-3 recycling and promoting its recruitment in newly forming focal adhesion. In osteoblast differentiation, mediates the bone morphogenetic protein 2 (BMP2)-induced nuclear export of HDAC7, which results in the inhibition of HDAC7 transcriptional repression of RUNX2. In neurons, plays an important role in neuronal polarity by regulating the biogenesis of TGN-derived dendritic vesicles, and is involved in the maintenance of dendritic arborization and Golgi structure in hippocampal cells. May potentiate mitogenesis induced by the neuropeptide bombesin or vasopressin by mediating an increase in the duration of MAPK1/3 (ERK1/2) signaling, which leads to accumulation of immediate-early gene products including FOS that stimulate cell cycle progression. Plays an important role in the proliferative response induced by low calcium in keratinocytes, through sustained activation of MAPK1/3 (ERK1/2) pathway. Downstream of novel PKC signaling, plays a role in cardiac hypertrophy by phosphorylating HDAC5, which in turn triggers XPO1/CRM1-dependent nuclear export of HDAC5, MEF2A transcriptional activation and induction of downstream target genes that promote myocyte hypertrophy and pathological cardiac remodeling. Mediates cardiac troponin I (TNNI3) phosphorylation at the PKA sites, which results in reduced myofilament calcium sensitivity, and accelerated crossbridge cycling kinetics. The PRKD1-HDAC5 pathway is also involved in angiogenesis by mediating VEGFA-induced specific subset of gene expression, cell migration, and tube formation. In response to VEGFA, is necessary and required for HDAC7 phosphorylation which induces HDAC7 nuclear export and endothelial cell proliferation and migration. During apoptosis induced by cytarabine and other genotoxic agents, PRKD1 is cleaved by caspase-3 at Asp-378, resulting in activation of its kinase function and increased sensitivity of cells to the cytotoxic effects of genotoxic agents. In epithelial cells, is required for transducing flagellin-stimulated inflammatory responses by binding and phosphorylating TLR5, which contributes to MAPK14/p38 activation and production of inflammatory cytokines. Acts as an activator of NLRP3 inflammasome assembly by mediating phosphorylation of NLRP3. May play a role in inflammatory response by mediating activation of NF-kappa-B. May be involved in pain transmission by directly modulating TRPV1 receptor. Plays a role in activated KRAS-mediated stabilization of ZNF304 in colorectal cancer (CRC) cells. Regulates nuclear translocation of transcription factor TFEB in macrophages upon live S.enterica infection. This is Serine/threonine-protein kinase D1 (Prkd1) from Rattus norvegicus (Rat).